The following is a 185-amino-acid chain: Large ribosomal subunit protein uL5 (185 aa).

Belongs to the universal ribosomal protein uL5 family. As to quaternary structure, part of the 50S ribosomal subunit; part of the 5S rRNA/L5/L18/L25 subcomplex. Contacts the 5S rRNA and the P site tRNA. Forms a bridge to the 30S subunit in the 70S ribosome.

Its function is as follows. This is one of the proteins that bind and probably mediate the attachment of the 5S RNA into the large ribosomal subunit, where it forms part of the central protuberance. In the 70S ribosome it contacts protein S13 of the 30S subunit (bridge B1b), connecting the 2 subunits; this bridge is implicated in subunit movement. Contacts the P site tRNA; the 5S rRNA and some of its associated proteins might help stabilize positioning of ribosome-bound tRNAs. This Rhodopseudomonas palustris (strain BisA53) protein is Large ribosomal subunit protein uL5.